A 504-amino-acid polypeptide reads, in one-letter code: Maturase K (504 aa).

The protein belongs to the intron maturase 2 family. MatK subfamily.

It localises to the plastid. The protein resides in the chloroplast. Usually encoded in the trnK tRNA gene intron. Probably assists in splicing its own and other chloroplast group II introns. The polypeptide is Maturase K (Pseudoturritis turrita (Tower rock-cress)).